The sequence spans 2729 residues: Protein NO VEIN (2729 aa).

The segment at 1-27 (MQGNHDGSWSLHPSTNNGSGRANGNIN) is disordered. Short sequence motifs (nuclear localization signal) lie at residues 194 to 201 (KRKVDVLR) and 473 to 480 (MKRLGGSN). 2 disordered regions span residues 477–517 (GGSN…IPKL) and 2482–2515 (LPSS…DVTE). Basic and acidic residues-rich tracts occupy residues 488 to 497 (RNHEKSDSSK) and 2496 to 2515 (NTDD…DVTE).

In terms of tissue distribution, specifically expressed in developing embryos, leaf primordia, and shoot and root apical meristems.

It is found in the nucleus. In terms of biological role, essential protein required for cell fate determination during embryogenesis. Mediates auxin-dependent coordinated cell-fate specification and patterning in embryos (e.g. cotyledon outgrowth and separation), shoots and roots (e.g. leaf vascular development, cellular patterning and stem cell maintenance in the meristems). Required for provascular PIN1 expression and region-specific expression of PIN7 in leaf primordia, cell type-specific expression of PIN3, PIN4, and PIN7 in the root, and PIN2 polarity in the root cortex. This Arabidopsis thaliana (Mouse-ear cress) protein is Protein NO VEIN.